The following is a 148-amino-acid chain: UPF0756 membrane protein NMA2160 (148 aa).

A run of 4 helical transmembrane segments spans residues 13 to 35 (LILLGVVSNNNSITISATILLLM), 50 to 70 (HGLNLGIILLTIGVLSPLVSG), 80 to 100 (FLNFKMISAVFIGIFVAWLAG), and 121 to 141 (VIGVAFMGGIPVGPLIAAGIL).

Belongs to the UPF0756 family.

The protein localises to the cell membrane. This Neisseria meningitidis serogroup A / serotype 4A (strain DSM 15465 / Z2491) protein is UPF0756 membrane protein NMA2160.